The primary structure comprises 675 residues: Protein PALS1 (675 aa).

Positions Met-1 to Glu-345 are required for the correct localization of PALS1 and PATJ at cell-cell contacts and the normal formation of tight junctions and adherens junctions. Phosphoserine occurs at positions 14 and 25. An interaction with PARD6B region spans residues Leu-21 to Asp-140. The disordered stretch occupies residues Arg-51 to Leu-79. A compositionally biased stretch (basic and acidic residues) spans Ala-54 to Leu-79. Phosphoserine is present on residues Ser-83 and Ser-84. L27 domains follow at residues Asn-120–Ser-177 and Pro-179–Glu-235. The segment at Pro-181 to Tyr-243 is interaction with LIN7C. One can recognise a PDZ domain in the interval Ile-256–Gln-336. The SH3 domain maps to Glu-345–Glu-417. The Guanylate kinase-like domain maps to Lys-479–Asn-660. ATP is bound at residue Gly-486–Asn-493.

The protein belongs to the MAGUK family. Heterodimer with MPP1. Forms a heterotrimeric complex composed of PALS1, LIN7B and PATJ; the N-terminal L27 domain of PALS1 interacts with the L27 domain of PATJ and the C-terminal L27 domain of PALS1 interacts with the L27 domain of LIN7B. Component of a complex composed of PALS1, CRB1 and MPP4. Component of a complex whose core is composed of ARHGAP17, AMOT, PALS1, PATJ and PARD3/PAR3. Component of a complex composed of PALS1, CRB1 and EPB41L5. Within the complex, interacts (via HOOK domain) with EPB41L5 (via FERM domain), and interacts with CRB1 (via intracellular domain). Component of a complex composed of PALS1, MPP3 and CRB1; PALS1 acts as a bridging protein between MPP3 (via guanylate kinase-like domain) and CRB1. Component of a complex composed of CRB3, PALS1 and PATJ. As part of the Crumbs complex; interacts with WWP1, the interaction is enhanced by AMOTL2 and facilitates WWP1 localization to the plasma membrane. The Crumbs complex promotes monoubiquitination of AMOTL2 by WWP1, which activates the Hippo signaling pathway. Interacts (via PDZ domain) with PATJ (via N-terminus). Interacts with EZR. Interacts (via PDZ domain) with CRB1 (via C-terminal ERLI motif). While the PDZ domain is sufficient for interaction with CRB1, the adjacent SH3 and guanylate kinase-like domains are likely to contribute to a high affinity interaction. Interacts with WWTR1/TAZ (via WW domain). Interacts with MPP7. Interacts (via PDZ domain) with CRB3 (via C-terminus). Interacts with LIN7C. Interacts with MPDZ. Interacts with PARD6B. Interacts with SC6A1. Interacts with CDH5; the interaction promotes PALS1 localization to cell junctions and is required for CDH5-mediated vascular lumen formation and endothelial cell. Interacts with NPHP1 (via coiled coil and SH3 domains). Interacts with NPHP4. Interacts with CRB2. In terms of tissue distribution, expressed in the retinal pigment epithelium (at protein level). Expressed in the vascular plexus of the retina (at protein level). In the brain, expressed in the dentate gyrus of hippocampus, striatum and cerebellum (at protein level). Expressed in the sciatic nerve (at protein level). Expressed in the kidney nephron (at protein level). Expressed in the lung, and heart. Expressed in placenta, brain, skeletal muscles, pancreas and liver.

The protein resides in the golgi apparatus. It is found in the cell membrane. The protein localises to the endomembrane system. It localises to the cell junction. Its subcellular location is the tight junction. The protein resides in the adherens junction. It is found in the cell projection. The protein localises to the axon. It localises to the perikaryon. Its subcellular location is the apical cell membrane. Its function is as follows. Plays a role in tight junction biogenesis and in the establishment of cell polarity in epithelial cells. Also involved in adherens junction biogenesis by ensuring correct localization of the exocyst complex protein EXOC4/SEC8 which allows trafficking of adherens junction structural component CDH1 to the cell surface. Plays a role through its interaction with CDH5 in vascular lumen formation and endothelial membrane polarity. Required during embryonic and postnatal retinal development. Required for the maintenance of cerebellar progenitor cells in an undifferentiated proliferative state, preventing premature differentiation, and is required for cerebellar histogenesis, fissure formation, cerebellar layer organization and cortical development. Plays a role in neuronal progenitor cell survival, potentially via promotion of mTOR signaling. Plays a role in the radial and longitudinal extension of the myelin sheath in Schwann cells. May modulate SC6A1/GAT1-mediated GABA uptake by stabilizing the transporter. May play a role in the T-cell receptor-mediated activation of NF-kappa-B. Required for localization of EZR to the apical membrane of parietal cells and may play a role in the dynamic remodeling of the apical cytoskeleton. Required for the normal polarized localization of the vesicular marker STX4. Required for the correct trafficking of the myelin proteins PMP22 and MAG. Involved in promoting phosphorylation and cytoplasmic retention of transcriptional coactivators YAP1 and WWTR1/TAZ which leads to suppression of TGFB1-dependent transcription of target genes such as CCN2/CTGF, SERPINE1/PAI1, SNAI1/SNAIL1 and SMAD7. This chain is Protein PALS1, found in Mus musculus (Mouse).